Here is a 441-residue protein sequence, read N- to C-terminus: Transcription factor TOXE (441 aa).

The tract at residues Thr14–Lys40 is basic DNA-binding region. The tract at residues Phe209 to Ser243 is disordered. The span at Asn212–Pro221 shows a compositional bias: basic and acidic residues. The segment covering Cys228–Asn241 has biased composition (polar residues). ANK repeat units follow at residues Asp289–Ile318, Ser322–Ala351, Glu355–Glu384, and Glu413–Val440.

It belongs to the bZIP family. Monomer.

The protein localises to the nucleus. Functionally, transcription factor, part of the diffuse TOX2 gene cluster that mediates the biosynthesis of the HC-toxin, cyclic tetrapeptide of structure cyclo(D-Pro-L-Ala-D-Ala-L-Aeo), where Aeo stands for 2-amino-9,10-epoxi-8-oxodecanoic acid. HC-toxin is a determinant of specificity and virulence in the interaction between the producing fungus and its host, maize. TOXE is a pathway-specific transcription factor which coordinates the expression of genes involved in HC-toxin biosynthesis. Binds to the tox-box, a 10-bp motif with the consensus 5'-ATCTCNCGNA-3', which is found in the promoter of all genes involved in HC-toxin biosynthesis. Required for pathogenicity of the fungus on maize. The sequence is that of Transcription factor TOXE from Cochliobolus carbonum (Maize leaf spot fungus).